A 187-amino-acid polypeptide reads, in one-letter code: Superoxide dismutase [Cu-Zn] (187 aa).

The first 23 residues, 1–23 (MMKMKTLLALAISGICAAGVANA), serve as a signal peptide directing secretion. Cu cation is bound by residues His80, His82, and His105. A disulfide bridge connects residues Cys87 and Cys183. Zn(2+) is bound by residues His105, His114, His123, and Asp126. A Cu cation-binding site is contributed by His161.

This sequence belongs to the Cu-Zn superoxide dismutase family. In terms of assembly, homodimer. The cofactor is Cu cation. Requires Zn(2+) as cofactor.

It localises to the periplasm. The enzyme catalyses 2 superoxide + 2 H(+) = H2O2 + O2. Functionally, destroys radicals which are normally produced within the cells and which are toxic to biological systems. May confer survival advantage by accelerating dismutation of superoxide of environmental origin to hydrogen peroxide, disruptive to the normal mucociliary clearance process in the host. The polypeptide is Superoxide dismutase [Cu-Zn] (sodC) (Haemophilus parainfluenzae).